A 230-amino-acid polypeptide reads, in one-letter code: Cytidylate kinase (230 aa).

Residue 12-20 (GPSGTGKST) coordinates ATP.

This sequence belongs to the cytidylate kinase family. Type 1 subfamily.

It is found in the cytoplasm. The catalysed reaction is CMP + ATP = CDP + ADP. It catalyses the reaction dCMP + ATP = dCDP + ADP. This chain is Cytidylate kinase, found in Corynebacterium glutamicum (strain ATCC 13032 / DSM 20300 / JCM 1318 / BCRC 11384 / CCUG 27702 / LMG 3730 / NBRC 12168 / NCIMB 10025 / NRRL B-2784 / 534).